Consider the following 28-residue polypeptide: Conotoxin Vi14b (28 aa).

2 disulfide bridges follow: cysteine 4-cysteine 21 and cysteine 7-cysteine 18. 2 positions are modified to N6-acetyllysine: lysine 15 and lysine 25.

Post-translationally, the two N6-acetyllysines at position 15 and 25 have been deduced from the mass difference of 42. They are not common in venom proteins. Expressed by the venom gland.

It localises to the secreted. In vitro, inhibits proliferation of the mice ovarian cancer cells ID8. This Conus virgo (Virgin cone) protein is Conotoxin Vi14b.